The chain runs to 392 residues: NAD(P)H-quinone oxidoreductase subunit H, chloroplastic (392 aa).

This sequence belongs to the complex I 49 kDa subunit family. As to quaternary structure, NDH is composed of at least 16 different subunits, 5 of which are encoded in the nucleus.

The protein localises to the plastid. The protein resides in the chloroplast thylakoid membrane. It catalyses the reaction a plastoquinone + NADH + (n+1) H(+)(in) = a plastoquinol + NAD(+) + n H(+)(out). It carries out the reaction a plastoquinone + NADPH + (n+1) H(+)(in) = a plastoquinol + NADP(+) + n H(+)(out). NDH shuttles electrons from NAD(P)H:plastoquinone, via FMN and iron-sulfur (Fe-S) centers, to quinones in the photosynthetic chain and possibly in a chloroplast respiratory chain. The immediate electron acceptor for the enzyme in this species is believed to be plastoquinone. Couples the redox reaction to proton translocation, and thus conserves the redox energy in a proton gradient. In Marchantia polymorpha (Common liverwort), this protein is NAD(P)H-quinone oxidoreductase subunit H, chloroplastic.